A 295-amino-acid polypeptide reads, in one-letter code: Elongation factor Ts (295 aa).

Residues 79–82 (TDFV) are involved in Mg(2+) ion dislocation from EF-Tu.

The protein belongs to the EF-Ts family.

The protein resides in the cytoplasm. Its function is as follows. Associates with the EF-Tu.GDP complex and induces the exchange of GDP to GTP. It remains bound to the aminoacyl-tRNA.EF-Tu.GTP complex up to the GTP hydrolysis stage on the ribosome. The protein is Elongation factor Ts of Bacillus cereus (strain G9842).